A 476-amino-acid polypeptide reads, in one-letter code: Sulfate adenylyltransferase subunit 1 (476 aa).

A tr-type G domain is found at 25–241 (KSLLRFLTCG…LETVEVQRVV (217 aa)). The segment at 34–41 (GSVDDGKS) is G1. Residue 34–41 (GSVDDGKS) coordinates GTP. The interval 92–96 (GITID) is G2. The interval 113–116 (DTPG) is G3. GTP contacts are provided by residues 113–117 (DTPGH) and 168–171 (NKMD). The interval 168 to 171 (NKMD) is G4. Positions 206–208 (SAL) are G5.

Belongs to the TRAFAC class translation factor GTPase superfamily. Classic translation factor GTPase family. CysN/NodQ subfamily. In terms of assembly, heterodimer composed of CysD, the smaller subunit, and CysN.

The enzyme catalyses sulfate + ATP + H(+) = adenosine 5'-phosphosulfate + diphosphate. The protein operates within sulfur metabolism; hydrogen sulfide biosynthesis; sulfite from sulfate: step 1/3. Functionally, with CysD forms the ATP sulfurylase (ATPS) that catalyzes the adenylation of sulfate producing adenosine 5'-phosphosulfate (APS) and diphosphate, the first enzymatic step in sulfur assimilation pathway. APS synthesis involves the formation of a high-energy phosphoric-sulfuric acid anhydride bond driven by GTP hydrolysis by CysN coupled to ATP hydrolysis by CysD. The chain is Sulfate adenylyltransferase subunit 1 from Erwinia tasmaniensis (strain DSM 17950 / CFBP 7177 / CIP 109463 / NCPPB 4357 / Et1/99).